The following is a 206-amino-acid chain: N-(5'-phosphoribosyl)anthranilate isomerase (206 aa).

This sequence belongs to the TrpF family.

The enzyme catalyses N-(5-phospho-beta-D-ribosyl)anthranilate = 1-(2-carboxyphenylamino)-1-deoxy-D-ribulose 5-phosphate. It participates in amino-acid biosynthesis; L-tryptophan biosynthesis; L-tryptophan from chorismate: step 3/5. The chain is N-(5'-phosphoribosyl)anthranilate isomerase from Chlamydia felis (strain Fe/C-56) (Chlamydophila felis).